Reading from the N-terminus, the 134-residue chain is Small ribosomal subunit protein bS6 (134 aa).

A disordered region spans residues 103–134 (AAPVKSAEEGTEEVAAEAATEAPAETTTTVEG). A compositionally biased stretch (low complexity) spans 118-134 (AEAATEAPAETTTTVEG).

This sequence belongs to the bacterial ribosomal protein bS6 family.

Its function is as follows. Binds together with bS18 to 16S ribosomal RNA. The chain is Small ribosomal subunit protein bS6 from Citrifermentans bemidjiense (strain ATCC BAA-1014 / DSM 16622 / JCM 12645 / Bem) (Geobacter bemidjiensis).